Here is a 159-residue protein sequence, read N- to C-terminus: Type IV major alpha-pilin (159 aa).

A propeptide spans 1 to 6 (MNAQKG) (leader sequence). F7 carries the post-translational modification N-methylphenylalanine. A helical transmembrane segment spans residues 7–27 (FTLIELMIVIAIIGILAAIAL). Residues 64–87 (VLSEESSTSKENIGLTSSETSTKP) are disordered. Residues 67 to 87 (EESSTSKENIGLTSSETSTKP) are compositionally biased toward polar residues. A disulfide bridge connects residues C137 and C156.

Belongs to the N-Me-Phe pilin family. Major component of the type IV pilus (T4P) that plays a role in surface and attachment to the host epithelial tissues.

It is found in the fimbrium. It localises to the membrane. This chain is Type IV major alpha-pilin (tfpI), found in Moraxella bovis.